The chain runs to 326 residues: MKQDASRNAAYTVDCEDYVHVVEFNPFENGDSGNLIAYGGNNYVVIGTCTFQEEEADVEGIQYKTLRTFHHGVRVDGIAWSPETRLDSLPPVIKFCTSAADMKIRLFTSDLQDKNEYKVLEGHTDFINGLVFDPKEGQEIASVSDDHTCRIWNLEGVQTAHFVLHSPGMSVCWHPEETFKLMVAEKNGTIRFYDLLAQQAILSLESEQVPLMSAHWCLKNTFKVGAVAGNDWLIWDITRSSYPQNKRPVHMDRACLFRWSTISENLFATTGYPGKMASQFQIHHLGHPQPILMGSVAVGSGLSWHRTLPLCVIGGDHKLLFWVTEV.

WD repeat units lie at residues 6-54 (SRNA…FQEE), 61-109 (IQYK…LFTS), 115-154 (NEYK…IWNL), 159-195 (TAHF…FYDL), 199-237 (QAIL…IWDI), 242-282 (YPQN…QFQI), and 287-324 (HPQP…FWVT).

Component of the Nup107-160 subcomplex of the nuclear pore complex (NPC). The Nup107-160 subcomplex includes NUP160, NUP133, NUP107, NUP98, NUP85, NUP43, NUP37, SEH1 and SEC13.

Its subcellular location is the chromosome. It localises to the centromere. The protein resides in the kinetochore. The protein localises to the nucleus. It is found in the nuclear pore complex. Functionally, component of the Nup107-160 subcomplex of the nuclear pore complex (NPC). The Nup107-160 subcomplex is required for the assembly of a functional NPC. The Nup107-160 subcomplex is also required for normal kinetochore microtubule attachment, mitotic progression and chromosome segregation. The protein is Nucleoporin Nup37 (NUP37) of Homo sapiens (Human).